A 126-amino-acid polypeptide reads, in one-letter code: Fumarate reductase subunit C (126 aa).

A run of 3 helical transmembrane segments spans residues 30–50 (IFVA…GAGG), 64–84 (VVVV…VTWF), and 105–125 (VLAG…WMVL).

This sequence belongs to the FrdC family. Part of an enzyme complex containing four subunits: a flavoprotein (FrdA), an iron-sulfur protein (FrdB), and two hydrophobic anchor proteins (FrdC and FrdD).

Its subcellular location is the cell membrane. Functionally, anchors the catalytic components of the fumarate reductase complex to the cell membrane, binds quinones. The polypeptide is Fumarate reductase subunit C (Mycobacterium tuberculosis (strain ATCC 25177 / H37Ra)).